A 149-amino-acid chain; its full sequence is 6,7-dimethyl-8-ribityllumazine synthase (149 aa).

5-amino-6-(D-ribitylamino)uracil is bound by residues Phe-22, 56–58 (ALE), and 80–82 (AVI). Residue 85-86 (ET) participates in (2S)-2-hydroxy-3-oxobutyl phosphate binding. Residue His-88 is the Proton donor of the active site. Asn-113 serves as a coordination point for 5-amino-6-(D-ribitylamino)uracil. Arg-127 provides a ligand contact to (2S)-2-hydroxy-3-oxobutyl phosphate.

This sequence belongs to the DMRL synthase family.

The catalysed reaction is (2S)-2-hydroxy-3-oxobutyl phosphate + 5-amino-6-(D-ribitylamino)uracil = 6,7-dimethyl-8-(1-D-ribityl)lumazine + phosphate + 2 H2O + H(+). Its pathway is cofactor biosynthesis; riboflavin biosynthesis; riboflavin from 2-hydroxy-3-oxobutyl phosphate and 5-amino-6-(D-ribitylamino)uracil: step 1/2. Its function is as follows. Catalyzes the formation of 6,7-dimethyl-8-ribityllumazine by condensation of 5-amino-6-(D-ribitylamino)uracil with 3,4-dihydroxy-2-butanone 4-phosphate. This is the penultimate step in the biosynthesis of riboflavin. This is 6,7-dimethyl-8-ribityllumazine synthase from Methylobacillus flagellatus (strain ATCC 51484 / DSM 6875 / VKM B-1610 / KT).